The primary structure comprises 280 residues: MDLQGRGVPSIDRLRVLLMLFHTMAQIMAEQEVENLSGLSTNPEKDIFVVRENGTTCLMAEFAAKFIVPYDVWASNYVDLITEQADIALTRGAEVKGRCGHSQSELQVFWVDRAYALKMLFVKESHNMSKGPEATWRLSKVQFVYDSSEKTHFKDAVSAGKHTANSHHLSALVTPAGKSYECQAQQTISLASSDPQKTVTMILSAVHIQPFDIISDFVFSEEHKCPVDEREQLEETLPLILGLILGLVIMVTLAIYHVHHKMTANQVQIPRDRSQYKHMG.

Positions 1–29 (MDLQGRGVPSIDRLRVLLMLFHTMAQIMA) are cleaved as a signal peptide. Residues 30 to 235 (EQEVENLSGL…PVDEREQLEE (206 aa)) are Extracellular-facing. 3 N-linked (GlcNAc...) asparagine glycosylation sites follow: asparagine 35, asparagine 53, and asparagine 127. A helical transmembrane segment spans residues 236-256 (TLPLILGLILGLVIMVTLAIY). The Cytoplasmic portion of the chain corresponds to 257-280 (HVHHKMTANQVQIPRDRSQYKHMG).

It belongs to the LAMP family. Glycosylated. As to expression, expressed in plasmocytoid dendritic cells. Expressed in suprabasal skin keratinocytes and squamous cells (at protein level). Expressed in the brain and weakly in spleen and skin. Expressed in plasmocytoid dendritic cells.

Its subcellular location is the cell membrane. It localises to the cytoplasmic vesicle. The protein resides in the secretory vesicle. It is found in the synaptic vesicle membrane. The protein localises to the endoplasmic reticulum-Golgi intermediate compartment membrane. Its subcellular location is the endosome membrane. It localises to the cytoplasmic vesicle membrane. The protein resides in the cell projection. It is found in the dendrite. The protein localises to the growth cone membrane. Its subcellular location is the early endosome membrane. It localises to the recycling endosome. In terms of biological role, plays a role in short-term synaptic plasticity in a subset of GABAergic neurons in the brain. The sequence is that of Lysosome-associated membrane glycoprotein 5 (LAMP5) from Homo sapiens (Human).